Here is a 151-residue protein sequence, read N- to C-terminus: S-protein homolog 1 (151 aa).

The signal sequence occupies residues Met1–Thr18.

The protein belongs to the plant self-incompatibility (S1) protein family. As to expression, restricted to floral tissues.

Its subcellular location is the secreted. This Arabidopsis thaliana (Mouse-ear cress) protein is S-protein homolog 1.